Reading from the N-terminus, the 544-residue chain is Probable protein kinase UbiB (544 aa).

The Protein kinase domain occupies 123-501; the sequence is DFDLVPLASA…KRQQATGKFL (379 aa). ATP contacts are provided by residues 129–137 and K152; that span reads LASASIAQV. Residue D287 is the Proton acceptor of the active site. Transmembrane regions (helical) follow at residues 496 to 516 and 519 to 539; these read ATGKFLFGVGATLVVCSAILV and TYEQLSLATAIAGVTFWLFSW.

This sequence belongs to the ABC1 family. UbiB subfamily.

The protein resides in the cell inner membrane. It participates in cofactor biosynthesis; ubiquinone biosynthesis [regulation]. Its function is as follows. Is probably a protein kinase regulator of UbiI activity which is involved in aerobic coenzyme Q (ubiquinone) biosynthesis. This chain is Probable protein kinase UbiB, found in Vibrio vulnificus (strain CMCP6).